Consider the following 560-residue polypeptide: Ribonuclease J 1 (560 aa).

Residues His76, His78, Asp80, His81, His144, and Asp166 each contribute to the Zn(2+) site. His366 to His370 contacts substrate. Residue His392 participates in Zn(2+) binding.

The protein belongs to the metallo-beta-lactamase superfamily. RNA-metabolizing metallo-beta-lactamase-like family. Bacterial RNase J subfamily. As to quaternary structure, homodimer, may be a subunit of the RNA degradosome. The cofactor is Zn(2+).

The protein resides in the cytoplasm. An RNase that has 5'-3' exonuclease and possibly endonuclease activity. Involved in maturation of rRNA and in some organisms also mRNA maturation and/or decay. Has an overlapping but not completely redundant role with RNase J2 in the decay of mRNA. In Streptococcus pyogenes serotype M3 (strain ATCC BAA-595 / MGAS315), this protein is Ribonuclease J 1.